The following is a 293-amino-acid chain: Protease HtpX (293 aa).

2 consecutive transmembrane segments (helical) span residues Ile4–Leu24 and Gly34–Ser54. Position 139 (His139) interacts with Zn(2+). The active site involves Glu140. Position 143 (His143) interacts with Zn(2+). Transmembrane regions (helical) follow at residues Ile158–Leu178 and Leu193–Ile213. A Zn(2+)-binding site is contributed by Glu222.

The protein belongs to the peptidase M48B family. It depends on Zn(2+) as a cofactor.

The protein localises to the cell inner membrane. The polypeptide is Protease HtpX (Pectobacterium carotovorum subsp. carotovorum (strain PC1)).